The chain runs to 106 residues: GATVKVTNATFKSDVLESDKPVLVHFEGPWCGPCKMVAPVLDEIANEYEGKVKVAKVNTDENPQLASQYGVRSIPTRLMFKGGEVAANMVGAAPKTRLAAFLDASL.

The Thioredoxin domain occupies 1–106; that stretch reads GATVKVTNAT…RLAAFLDASL (106 aa). Residues C31 and C34 are joined by a disulfide bond.

Belongs to the thioredoxin family.

Participates in various redox reactions through the reversible oxidation of its active center dithiol to a disulfide and catalyzes dithiol-disulfide exchange reactions. The sequence is that of Thioredoxin (trxA) from Kitasatospora aureofaciens (Streptomyces aureofaciens).